The primary structure comprises 194 residues: MRLILLGPPGAGKGTQAGLLTKKHGIPQLSTGDMLRAAVAQQSEIGKRAKAVMDAGQLVSDEIVNQIVSERIDAPDCANGFILDGYPRTVPQAQALSQMLSGKGLKLDAVIELKVDENALVKRMESRVAETIAKGAQVRSDDNPEAFRKRLVEYREKTAPLSSYYAGTGELRIINGMAPVEEVTAEIERILVPA.

Position 10–15 (Gly-10–Thr-15) interacts with ATP. The NMP stretch occupies residues Ser-30 to Val-59. AMP contacts are provided by residues Thr-31, Arg-36, Gln-57 to Val-59, Gly-85 to Arg-88, and Gln-92. An LID region spans residues Ser-126–Asp-142. An ATP-binding site is contributed by Arg-127. Positions 139 and 150 each coordinate AMP. ATP is bound at residue Ala-178.

It belongs to the adenylate kinase family. Monomer.

The protein resides in the cytoplasm. The catalysed reaction is AMP + ATP = 2 ADP. Its pathway is purine metabolism; AMP biosynthesis via salvage pathway; AMP from ADP: step 1/1. In terms of biological role, catalyzes the reversible transfer of the terminal phosphate group between ATP and AMP. Plays an important role in cellular energy homeostasis and in adenine nucleotide metabolism. The polypeptide is Adenylate kinase (Brucella melitensis biotype 1 (strain ATCC 23456 / CCUG 17765 / NCTC 10094 / 16M)).